The primary structure comprises 400 residues: Argininosuccinate synthase (400 aa).

Alanine 10–serine 18 is a binding site for ATP. Tyrosine 89 contacts L-citrulline. An ATP-binding site is contributed by glycine 119. 3 residues coordinate L-aspartate: threonine 121, asparagine 125, and aspartate 126. Residue asparagine 125 participates in L-citrulline binding. Residues arginine 129, serine 177, serine 186, glutamate 262, and tyrosine 274 each contribute to the L-citrulline site.

It belongs to the argininosuccinate synthase family. Type 1 subfamily. As to quaternary structure, homotetramer.

The protein localises to the cytoplasm. It catalyses the reaction L-citrulline + L-aspartate + ATP = 2-(N(omega)-L-arginino)succinate + AMP + diphosphate + H(+). It functions in the pathway amino-acid biosynthesis; L-arginine biosynthesis; L-arginine from L-ornithine and carbamoyl phosphate: step 2/3. This chain is Argininosuccinate synthase, found in Synechococcus sp. (strain JA-2-3B'a(2-13)) (Cyanobacteria bacterium Yellowstone B-Prime).